The sequence spans 252 residues: Triosephosphate isomerase (252 aa).

10 to 12 lines the substrate pocket; that stretch reads NWK. The active-site Electrophile is His96. Glu168 (proton acceptor) is an active-site residue. Substrate-binding positions include Gly174, Ser214, and 235–236; that span reads GG.

Belongs to the triosephosphate isomerase family. As to quaternary structure, homodimer.

It localises to the cytoplasm. It carries out the reaction D-glyceraldehyde 3-phosphate = dihydroxyacetone phosphate. Its pathway is carbohydrate biosynthesis; gluconeogenesis. The protein operates within carbohydrate degradation; glycolysis; D-glyceraldehyde 3-phosphate from glycerone phosphate: step 1/1. Functionally, seems to be capable of enhancing bacteriocin synthesis. Its function is as follows. Involved in the gluconeogenesis. Catalyzes stereospecifically the conversion of dihydroxyacetone phosphate (DHAP) to D-glyceraldehyde-3-phosphate (G3P). This is Triosephosphate isomerase from Lactobacillus delbrueckii subsp. lactis.